A 172-amino-acid polypeptide reads, in one-letter code: Endoribonuclease YbeY (172 aa).

His137, His141, and His147 together coordinate Zn(2+).

The protein belongs to the endoribonuclease YbeY family. Requires Zn(2+) as cofactor.

It is found in the cytoplasm. Single strand-specific metallo-endoribonuclease involved in late-stage 70S ribosome quality control and in maturation of the 3' terminus of the 16S rRNA. This chain is Endoribonuclease YbeY, found in Dehalococcoides mccartyi (strain ATCC BAA-2266 / KCTC 15142 / 195) (Dehalococcoides ethenogenes (strain 195)).